We begin with the raw amino-acid sequence, 341 residues long: UDP-N-acetylenolpyruvoylglucosamine reductase (341 aa).

The FAD-binding PCMH-type domain occupies 15–185; it reads LAQSCADLVE…TAVGLRLVKR (171 aa). Arg-161 is a catalytic residue. The active-site Proton donor is Ser-231. Glu-327 is a catalytic residue.

The protein belongs to the MurB family. The cofactor is FAD.

It is found in the cytoplasm. It carries out the reaction UDP-N-acetyl-alpha-D-muramate + NADP(+) = UDP-N-acetyl-3-O-(1-carboxyvinyl)-alpha-D-glucosamine + NADPH + H(+). The protein operates within cell wall biogenesis; peptidoglycan biosynthesis. Functionally, cell wall formation. The polypeptide is UDP-N-acetylenolpyruvoylglucosamine reductase (Shewanella baltica (strain OS195)).